The following is a 734-amino-acid chain: MSMMTVWALRRNVRRKNHSMLVRYISGSASMKPKEQCIEKILVANRGEIACRIMRTAKRLGIQTVAVYSDADRDSLHVKSADEAVRIGPPSARLSYLSGVTIMEAAARTGAQAIHPGYGFLSESSDFAQLCEDSGLTFIGPPASAIRDMGDKSASKRIMGAAGVPLVPGYHGHEQDIDHMKSEAEKIGYPIIIKPTHGGGGKGMRIVQSGKDFADSFLGAQREAAASFGVNTILLEKYITRPRHIEVQIFGDKHGNVLHLYERDCSVQRRHQKIIEEAPAPNISEKFRANLGQAAVSAARAVGYYNAGTVEFIVDTESDQFYFMEMNTRLQVEHPVTEMIVGQDLVEWQIRVANGEPLPLSQSEVPMSGHAFEARIYAENVPKGFLPATGVLNHYRPVAVSPSVRVETGVEQGDTVSMHYDPMIAKLVVWGGNRGEALVKLKDCLSNFQVAGVPTNINFLQKLASHKEFAVGNVETHFIEHHKSDLFADESNPAATEVAYKAVKHSAALVAACISTIEHSTWNESNHGKVPSIWYSNPPFRVHHEAKQTIELEWNNECEGTGSNLISLGVRYQPDGSYLIEEGNDSPSLELRVTRAGKCDFRVEAAGLSMNVSLAAYLKDGYKHIHIWHGSEHHQFKQKVGIEFSEDEEGVQHRTSSETSSHPPGTIVAPMAGLVVKVLVENEAKVDQGQPILVLEAMKMEHVVKAPSSGSIQDLKVKAGQQVSDGSALFRIKG.

The N-terminal 25 residues, 1–25 (MSMMTVWALRRNVRRKNHSMLVRYI), are a transit peptide targeting the mitochondrion. The Biotin carboxylation domain maps to 37-484 (CIEKILVANR…ETHFIEHHKS (448 aa)). ATP-binding residues include K152, E236, and H271. One can recognise an ATP-grasp domain in the interval 156–354 (KRIMGAAGVP…LVEWQIRVAN (199 aa)). 3 residues coordinate Mn(2+): E311, E325, and N327. R329 is an active-site residue. A Phosphoserine modification is found at S645. Residues 645–666 (SEDEEGVQHRTSSETSSHPPGT) form a disordered region. Residues 657-733 (SETSSHPPGT…SDGSALFRIK (77 aa)) form the Biotinyl-binding domain. K699 is subject to N6-biotinyllysine.

As to quaternary structure, probably a heterodimer composed of biotin-containing alpha subunits and beta subunits. Requires biotin as cofactor. The cofactor is Mn(2+). In roots, cotyledons, leaves, flowers, ovaries, siliques and embryos.

It localises to the mitochondrion matrix. It catalyses the reaction 3-methylbut-2-enoyl-CoA + hydrogencarbonate + ATP = 3-methyl-(2E)-glutaconyl-CoA + ADP + phosphate + H(+). It participates in amino-acid degradation; L-leucine degradation; (S)-3-hydroxy-3-methylglutaryl-CoA from 3-isovaleryl-CoA: step 2/3. Functionally, biotin-attachment subunit of the 3-methylcrotonyl-CoA carboxylase, an enzyme that catalyzes the conversion of 3-methylcrotonyl-CoA to 3-methylglutaconyl-CoA, a critical step for leucine and isovaleric acid catabolism. This chain is Methylcrotonoyl-CoA carboxylase subunit alpha, mitochondrial (MCCA), found in Arabidopsis thaliana (Mouse-ear cress).